Consider the following 225-residue polypeptide: RNA chaperone ProQ (225 aa).

Residues 103–173 are disordered; that stretch reads LEEAKARVQT…APREERHTPV (71 aa). A compositionally biased stretch (low complexity) spans 109–118; that stretch reads RVQTQRAAQQ. The segment covering 137 to 146 has biased composition (basic residues); sequence RERKPRPQQP. The span at 147-156 shows a compositional bias: basic and acidic residues; sequence RRKEGAEQRK.

It belongs to the ProQ family.

It is found in the cytoplasm. Its function is as follows. RNA chaperone with significant RNA binding, RNA strand exchange and RNA duplexing activities. May regulate ProP activity through an RNA-based, post-transcriptional mechanism. The chain is RNA chaperone ProQ from Klebsiella pneumoniae (strain 342).